Here is a 679-residue protein sequence, read N- to C-terminus: DNA-directed RNA polymerase subunit beta' (679 aa).

4 residues coordinate Zn(2+): Cys-69, Cys-71, Cys-87, and Cys-90. Asp-489, Asp-491, and Asp-493 together coordinate Mg(2+).

Belongs to the RNA polymerase beta' chain family. RpoC1 subfamily. In terms of assembly, in plastids the minimal PEP RNA polymerase catalytic core is composed of four subunits: alpha, beta, beta', and beta''. When a (nuclear-encoded) sigma factor is associated with the core the holoenzyme is formed, which can initiate transcription. The cofactor is Mg(2+). Zn(2+) serves as cofactor.

It localises to the plastid. Its subcellular location is the chloroplast. It carries out the reaction RNA(n) + a ribonucleoside 5'-triphosphate = RNA(n+1) + diphosphate. In terms of biological role, DNA-dependent RNA polymerase catalyzes the transcription of DNA into RNA using the four ribonucleoside triphosphates as substrates. The sequence is that of DNA-directed RNA polymerase subunit beta' from Oenothera argillicola (Appalachian evening primrose).